A 2262-amino-acid chain; its full sequence is Protein Ycf2 (2262 aa).

Residue 1607–1614 (GFIGTGRS) participates in ATP binding.

This sequence belongs to the Ycf2 family.

The protein localises to the plastid. The protein resides in the chloroplast stroma. Its function is as follows. Probable ATPase of unknown function. Its presence in a non-photosynthetic plant (Epifagus virginiana) and experiments in tobacco indicate that it has an essential function which is probably not related to photosynthesis. This chain is Protein Ycf2, found in Nuphar advena (Common spatterdock).